Here is a 361-residue protein sequence, read N- to C-terminus: MNQDKHPEITDEEQELITVEELSQKLELLYKDMEQIRRENLLFEAYLARNRKEIAKEDEVSEDKKGKGKKKDKNVDKKSLLLTNEEKFEIAQQEQDALKKQIDDGRIKSDQILETLRAILEETDMAITEIRKDAFDFQREILVGGENSRTGKIEAEKIIKFFEEKERQKDALIAKYSSKRTNLERQILKTNNQIQKKEEMGDDLKFIDFYQLQIENKKYVKEIDDKNKKLLALKISTNRISQTLKDEKQNLKQELDKGKEYASQMSERKKKISKIDAQIKSVKKVTSKLEKDRKIYDKQKEIFVQDNQDDVPQIMKYVQYKSKEQQLLYAIQNLERKIEIAELAYKKANRILQSSQQFQQK.

It belongs to the CFAP263 family. As to quaternary structure, forms a complex with CFAP184; the interaction is required for functional activity in cilia.

It is found in the cell projection. The protein localises to the cilium. Its function is as follows. In complex with CFAP263, acts as a regulator of ciliary beating that connects radial spoke 3 (RS3) to the inner dynein arm (IDA) and the nexin-dynein regulatory complex (N-DRC). The complex is positioned parallel to N-DRC and forms a connection between the arch at the base of RS3, the IDA tail and N-DRC. The protein is Cilia- and flagella-associated protein 263 (CFAP263) of Tetrahymena thermophila (strain SB210).